Reading from the N-terminus, the 294-residue chain is UDP-3-O-acyl-N-acetylglucosamine deacetylase (294 aa).

The Zn(2+) site is built by histidine 75, histidine 232, and aspartate 236. The active-site Proton donor is histidine 259.

It belongs to the LpxC family. Zn(2+) serves as cofactor.

The enzyme catalyses a UDP-3-O-[(3R)-3-hydroxyacyl]-N-acetyl-alpha-D-glucosamine + H2O = a UDP-3-O-[(3R)-3-hydroxyacyl]-alpha-D-glucosamine + acetate. It functions in the pathway glycolipid biosynthesis; lipid IV(A) biosynthesis; lipid IV(A) from (3R)-3-hydroxytetradecanoyl-[acyl-carrier-protein] and UDP-N-acetyl-alpha-D-glucosamine: step 2/6. Functionally, catalyzes the hydrolysis of UDP-3-O-myristoyl-N-acetylglucosamine to form UDP-3-O-myristoylglucosamine and acetate, the committed step in lipid A biosynthesis. In Sulfurovum sp. (strain NBC37-1), this protein is UDP-3-O-acyl-N-acetylglucosamine deacetylase.